We begin with the raw amino-acid sequence, 290 residues long: Syntaxin (290 aa).

A disordered region spans residues 1 to 22; the sequence is MTKDRLAALKAAQSDDDDNDDV. The Cytoplasmic portion of the chain corresponds to 1-267; that stretch reads MTKDRLAALK…KYQSKARRKK (267 aa). Positions 32 to 114 form a coiled coil; it reads MEEFFEQVDE…EEHTNKSSAD (83 aa). The t-SNARE coiled-coil homology domain occupies 194-256; the sequence is LADIEARHND…ETAKMDTKKA (63 aa). A helical; Anchor for type IV membrane protein transmembrane segment spans residues 268-288; sequence IMILVCLAILIIILVGVIGGT. Residues 289 to 290 are Extracellular-facing; the sequence is LG.

This sequence belongs to the syntaxin family.

It localises to the membrane. Potentially involved in docking of synaptic vesicles at presynaptic active zones. The chain is Syntaxin from Aplysia californica (California sea hare).